The sequence spans 576 residues: Adenine deaminase (576 aa).

The protein belongs to the metallo-dependent hydrolases superfamily. Adenine deaminase family. Requires Mn(2+) as cofactor.

The enzyme catalyses adenine + H2O + H(+) = hypoxanthine + NH4(+). The polypeptide is Adenine deaminase (Bacillus pumilus (strain SAFR-032)).